The primary structure comprises 34 residues: U10-ctenitoxin-Pr1a (34 aa).

Cystine bridges form between cysteine 2–cysteine 15, cysteine 9–cysteine 20, cysteine 14–cysteine 31, and cysteine 22–cysteine 29.

Expressed by the venom gland.

It localises to the secreted. Functionally, non-toxic to mice and insects. The chain is U10-ctenitoxin-Pr1a from Phoneutria reidyi (Brazilian Amazonian armed spider).